Consider the following 219-residue polypeptide: Putative germin-like protein 8-1 (219 aa).

The N-terminal stretch at 1–23 (MASFISFLLLAALIGMASWQAIA) is a signal peptide. Cys-33 and Cys-48 are disulfide-bonded. N-linked (GlcNAc...) asparagine glycans are attached at residues Asn-53 and Asn-79. In terms of domain architecture, Cupin type-1 spans 63–215 (AMLDKPRDTA…AFQVDKKIID (153 aa)). Residues His-112, His-114, Glu-119, and His-160 each contribute to the Mn(2+) site.

Belongs to the germin family. Oligomer (believed to be a pentamer but probably hexamer).

The protein localises to the secreted. Its subcellular location is the extracellular space. It is found in the apoplast. In terms of biological role, plays a role in broad-spectrum disease resistance. Probably has no oxalate oxidase activity even if the active site is conserved. The protein is Putative germin-like protein 8-1 of Oryza sativa subsp. japonica (Rice).